The sequence spans 321 residues: UPF0676 protein C1494.01 (321 aa).

One can recognise a Fe2OG dioxygenase domain in the interval 159 to 267; it reads EEDVLRLLKY…RQTIAYFVTP (109 aa).

This sequence belongs to the UPF0676 family.

The protein resides in the cytoplasm. Its subcellular location is the nucleus. The polypeptide is UPF0676 protein C1494.01 (Schizosaccharomyces pombe (strain 972 / ATCC 24843) (Fission yeast)).